The primary structure comprises 399 residues: Bombesin receptor subtype-3 (399 aa).

Residues 1 to 41 (MAQRQPHSPNQTLISITNDTESSSSVVSNDNTNKGWSGDNS) are Extracellular-facing. 2 N-linked (GlcNAc...) asparagine glycosylation sites follow: Asn10 and Asn18. Residues 42–63 (PGIEALCAIYITYAVIISVGIL) traverse the membrane as a helical segment. Residues 64–82 (GNAILIKVFFKTKSMQTVP) lie on the Cytoplasmic side of the membrane. The helical transmembrane segment at 83–103 (NIFITSLAFGDLLLLLTCVPV) threads the bilayer. The Extracellular portion of the chain corresponds to 104–121 (DATHYLAEGWLFGRIGCK). Residues Cys120 and Cys203 are joined by a disulfide bond. A helical membrane pass occupies residues 122 to 143 (VLSFIRLTSVGVSVFTLTILSA). Topologically, residues 144-163 (DRYKAVVKPLERQPSNAILK) are cytoplasmic. A helical membrane pass occupies residues 164–184 (TCVKAGCVWIVSMIFALPEAI). Over 185 to 220 (FSNVYTFRDPNKNMTFESCTSYPVSKKLLQEIHSLL) the chain is Extracellular. A helical membrane pass occupies residues 221–241 (CFLVFYIIPLSIISVYYSLIA). The Cytoplasmic segment spans residues 242 to 272 (RTLYKSTLNIPTEEQSHARKQIESRKRIART). Residues 273 to 293 (VLVLVALFALCWLPNHLLYLY) form a helical membrane-spanning segment. Residues 294-313 (HSFTSQTYVDPSAMHFIFTI) are Extracellular-facing. The chain crosses the membrane as a helical span at residues 314 to 333 (FSRVLAFSNSCVNPFALYWL). At 334–399 (SKSFQKHFKA…CSVKQAEDRF (66 aa)) the chain is on the cytoplasmic side. Residue Cys347 is the site of S-palmitoyl cysteine attachment.

The protein belongs to the G-protein coupled receptor 1 family. In terms of assembly, interacts with C6orf89. In germ cells in testis. Lung carcinoma cells.

The protein localises to the cell membrane. Role in sperm cell division, maturation, or function. This receptor mediates its action by association with G proteins that activate a phosphatidylinositol-calcium second messenger system. This chain is Bombesin receptor subtype-3 (BRS3), found in Homo sapiens (Human).